The chain runs to 123 residues: Small ribosomal subunit protein uS12 (123 aa).

Positions 1 to 28 (MPTIQQLIRNPREPKRTRTKTPALKACP) are disordered. The residue at position 89 (D89) is a 3-methylthioaspartic acid. Positions 104 to 123 (TQPVKNRKQRRSHYGAKKPK) are disordered. Positions 108–123 (KNRKQRRSHYGAKKPK) are enriched in basic residues.

The protein belongs to the universal ribosomal protein uS12 family. Part of the 30S ribosomal subunit. Contacts proteins S8 and S17. May interact with IF1 in the 30S initiation complex.

In terms of biological role, with S4 and S5 plays an important role in translational accuracy. Functionally, interacts with and stabilizes bases of the 16S rRNA that are involved in tRNA selection in the A site and with the mRNA backbone. Located at the interface of the 30S and 50S subunits, it traverses the body of the 30S subunit contacting proteins on the other side and probably holding the rRNA structure together. The combined cluster of proteins S8, S12 and S17 appears to hold together the shoulder and platform of the 30S subunit. This is Small ribosomal subunit protein uS12 from Hyphomonas neptunium (strain ATCC 15444).